Here is a 262-residue protein sequence, read N- to C-terminus: Shikimate dehydrogenase (NADP(+)) (262 aa).

Residues 13-15 (SLS) and T59 contribute to the shikimate site. Catalysis depends on K63, which acts as the Proton acceptor. Position 75 (D75) interacts with NADP(+). Shikimate is bound by residues N84 and D99. Residues 122-126 (GAGGA), 144-149 (NRTLEK), and M205 contribute to the NADP(+) site. Y207 contributes to the shikimate binding site. Residue G228 coordinates NADP(+).

Belongs to the shikimate dehydrogenase family. In terms of assembly, homodimer.

The catalysed reaction is shikimate + NADP(+) = 3-dehydroshikimate + NADPH + H(+). It functions in the pathway metabolic intermediate biosynthesis; chorismate biosynthesis; chorismate from D-erythrose 4-phosphate and phosphoenolpyruvate: step 4/7. Its function is as follows. Involved in the biosynthesis of the chorismate, which leads to the biosynthesis of aromatic amino acids. Catalyzes the reversible NADPH linked reduction of 3-dehydroshikimate (DHSA) to yield shikimate (SA). The sequence is that of Shikimate dehydrogenase (NADP(+)) from Ignicoccus hospitalis (strain KIN4/I / DSM 18386 / JCM 14125).